The following is a 118-amino-acid chain: Succinate dehydrogenase assembly factor 1, mitochondrial (118 aa).

Positions 14–16 (LYR) match the LYR motif 1; required for interaction with HSC20 motif. An LYR motif 2; not required for interaction with HSC20 motif is present at residues 53 to 55 (LYR). The segment at 53-65 (LYRRGRRQLQMLR) is interaction with SDHB. Residues 72–118 (MGAFVRTRGPTEESNGAGAPGTLSGEGDDPRKPLDSMRTPKTPLDGR) form a disordered region.

It belongs to the complex I LYR family. SDHAF1 subfamily. As to quaternary structure, interacts with SDHB within an SDHA-SDHB subcomplex. Also interacts with the iron-sulfur transfer complex formed by HSC20, HSPA9 and ISCU through direct binding to HSC20. Binding of SDHAF1 to SDHB precedes and is necessary for recruitment of the iron-sulfur transfer complex by SDHAF1.

Its subcellular location is the mitochondrion matrix. Functionally, plays an essential role in the assembly of succinate dehydrogenase (SDH), an enzyme complex (also referred to as respiratory complex II) that is a component of both the tricarboxylic acid (TCA) cycle and the mitochondrial electron transport chain, and which couples the oxidation of succinate to fumarate with the reduction of ubiquinone (coenzyme Q) to ubiquinol. Promotes maturation of the iron-sulfur protein subunit SDHB of the SDH catalytic dimer, protecting it from the deleterious effects of oxidants. May act together with SDHAF3. Contributes to iron-sulfur cluster incorporation into SDHB by binding to SDHB and recruiting the iron-sulfur transfer complex formed by HSC20, HSPA9 and ISCU through direct binding to HSC20. The sequence is that of Succinate dehydrogenase assembly factor 1, mitochondrial from Bos taurus (Bovine).